Consider the following 209-residue polypeptide: Small ribosomal subunit protein uS4 (209 aa).

Residues 98–159 form the S4 RNA-binding domain; it reads RRLDSAVYRL…KSRKITRIND (62 aa).

This sequence belongs to the universal ribosomal protein uS4 family. As to quaternary structure, part of the 30S ribosomal subunit. Contacts protein S5. The interaction surface between S4 and S5 is involved in control of translational fidelity.

Its function is as follows. One of the primary rRNA binding proteins, it binds directly to 16S rRNA where it nucleates assembly of the body of the 30S subunit. Functionally, with S5 and S12 plays an important role in translational accuracy. The sequence is that of Small ribosomal subunit protein uS4 from Syntrophotalea carbinolica (strain DSM 2380 / NBRC 103641 / GraBd1) (Pelobacter carbinolicus).